The sequence spans 264 residues: MALVVKGKVNINEFIDLSKSEKLLPSMFTPVKSVMVSKVDKIMVHENESLSEVNLLKGVKLIEGGYVCLVGLVVSGEWNLPDNCRGGVSVCLVDKRMERADEATLGSYYTAAAKKRFQFKVVPNYGITTKDAEKNIWQVLVNIKNVKMSAGYCPLSLEFVSVCIVYKNNTKLGLREKVTSVNDGGPMELSEEVVDEFMENVPMSVRLAKFRTKSSKRGPKNNNNLGKGRSGGRPKPKSFDEVEKEFDNLIEDEAETSVADSDSY.

The interval 211–264 is disordered; sequence RTKSSKRGPKNNNNLGKGRSGGRPKPKSFDEVEKEFDNLIEDEAETSVADSDSY. The segment covering 237-247 has biased composition (basic and acidic residues); sequence KSFDEVEKEFD.

The protein belongs to the tobamovirus movement protein family. In terms of assembly, binds to host RBCS at the plasmodesmata; this interaction seems required for viral systemic movement. In resistant plants, interacts with host MBP2C at host microtubules; this interaction prevents virus cell to cell movement. In resistant plants, interacts with host resistance (R) protein (e.g. tomato ToMV resistance protein TM-2(2), AC Q71BG9) at the host plasma membrane; this interaction triggers host defense responses leading to programmed cell death.

Its subcellular location is the host cytoplasm. It is found in the host cytoskeleton. The protein resides in the host cell junction. It localises to the host plasmodesma. Functionally, transports viral genome to neighboring plant cells directly through plasmosdesmata, without any budding. The movement protein allows efficient cell to cell propagation, by bypassing the host cell wall barrier. Forms a ribonucleoprotein complex with viral RNA. Binds microtubules and modulates microtubule stability. Can bind double-stranded DNA. Triggers host hypersensitive defense reaction in incompatible plants harboring resistance (R) proteins. This Tomato mosaic virus (strain S-1) (ToMV) protein is Movement protein (MP).